A 301-amino-acid chain; its full sequence is GTPase Era (301 aa).

An Era-type G domain is found at Y7–E175. Residues G15 to S22 are G1. G15 to S22 contacts GTP. A G2 region spans residues Q41–H45. The G3 stretch occupies residues D62–G65. GTP-binding positions include D62–L66 and N124–D127. A G4 region spans residues N124–D127. Residues I154–A156 are G5. The KH type-2 domain occupies L206–S283.

The protein belongs to the TRAFAC class TrmE-Era-EngA-EngB-Septin-like GTPase superfamily. Era GTPase family. In terms of assembly, monomer.

The protein localises to the cytoplasm. The protein resides in the cell inner membrane. In terms of biological role, an essential GTPase that binds both GDP and GTP, with rapid nucleotide exchange. Plays a role in 16S rRNA processing and 30S ribosomal subunit biogenesis and possibly also in cell cycle regulation and energy metabolism. This Klebsiella pneumoniae subsp. pneumoniae (strain ATCC 700721 / MGH 78578) protein is GTPase Era.